We begin with the raw amino-acid sequence, 114 residues long: Translation initiation factor 1A (114 aa).

Residues 19–91 form the S1-like domain; it reads SEFRLPGEGE…EKGDIVHKYE (73 aa).

Belongs to the eIF-1A family.

In terms of biological role, seems to be required for maximal rate of protein biosynthesis. Enhances ribosome dissociation into subunits and stabilizes the binding of the initiator Met-tRNA(I) to 40 S ribosomal subunits. The chain is Translation initiation factor 1A (eIF1A) from Pyrobaculum aerophilum (strain ATCC 51768 / DSM 7523 / JCM 9630 / CIP 104966 / NBRC 100827 / IM2).